The chain runs to 339 residues: Formyl peptide receptor-related sequence 6 (339 aa).

The Extracellular portion of the chain corresponds to 1–23 (MEANFSIPQNGSEVVFYDSTTSR). 2 N-linked (GlcNAc...) asparagine glycosylation sites follow: Asn-4 and Asn-10. Residues 24 to 44 (VICIFLVVVLSITFLLGVIGN) form a helical membrane-spanning segment. The Cytoplasmic segment spans residues 45–62 (GLVIYVAGFRMTHTVTTI). A helical membrane pass occupies residues 63-85 (CYLNLALSDFSYMASLPFQITSI). Over 86–99 (VMNGEWLFGWFLCK) the chain is Extracellular. A disulfide bridge links Cys-98 with Cys-178. Residues 100–120 (FVHMIINVNLFLSIFLITFIA) form a helical membrane-spanning segment. At 121–144 (MDRCICVLHPVWAQNHRTVNVATK) the chain is on the cytoplasmic side. Residues 145 to 165 (VIFGAWILVLMLIFPHCIFVT) form a helical membrane-spanning segment. Topologically, residues 166 to 198 (TVKDESGKVHCICNFESWAATPEEQVKVSMTVS) are extracellular. The helical transmembrane segment at 199-219 (LISVTISFIIGFSIPMIFIVI) threads the bilayer. Over 220–241 (CYGLMAAKIGRRGFVNSSRPLR) the chain is Cytoplasmic. Residues 242–262 (VLTAVAISFFVCWFPFQLIFL) traverse the membrane as a helical segment. At 263-280 (LGNIGNKETQNNIDTWVN) the chain is on the extracellular side. The chain crosses the membrane as a helical span at residues 281–301 (TASTLASFNSCLNPILYVFLG). The Cytoplasmic portion of the chain corresponds to 302–339 (QQFRERLIYSLSASLERALREDSALNSDKTRNLSSQRL).

This sequence belongs to the G-protein coupled receptor 1 family. Expressed exclusively in vomeronasal tissue. Expressed in 1.2 % of a subset of sensory neurons located in the apical layer of the vomeronasal organ. Each neuron appears to express only one receptor gene. Expressed in brain, spleen, skeletal muscle and at high level in testis.

The protein resides in the membrane. Its function is as follows. May have an olfactory function associated with the identification of pathogens or of pathogenic states. The chain is Formyl peptide receptor-related sequence 6 (Fpr-rs6) from Mus musculus (Mouse).